The primary structure comprises 279 residues: Putative short-chain type dehydrogenase/reductase MSMEG_6031/MSMEI_5872 (279 aa).

Position 11 to 33 (11 to 33 (FITGAARGQGRSHAVRLAEEGAD)) interacts with NAD(+). Residue Lys65 forms an Isoglutamyl lysine isopeptide (Lys-Gln) (interchain with Q-Cter in protein Pup) linkage. Ser158 contributes to the substrate binding site. Tyr171 functions as the Proton acceptor in the catalytic mechanism.

Belongs to the short-chain dehydrogenases/reductases (SDR) family.

This is Putative short-chain type dehydrogenase/reductase MSMEG_6031/MSMEI_5872 from Mycolicibacterium smegmatis (strain ATCC 700084 / mc(2)155) (Mycobacterium smegmatis).